Reading from the N-terminus, the 260-residue chain is tRNA1(Val) (adenine(37)-N6)-methyltransferase (260 aa).

This sequence belongs to the methyltransferase superfamily. tRNA (adenine-N(6)-)-methyltransferase family.

The protein resides in the cytoplasm. The enzyme catalyses adenosine(37) in tRNA1(Val) + S-adenosyl-L-methionine = N(6)-methyladenosine(37) in tRNA1(Val) + S-adenosyl-L-homocysteine + H(+). In terms of biological role, specifically methylates the adenine in position 37 of tRNA(1)(Val) (anticodon cmo5UAC). The chain is tRNA1(Val) (adenine(37)-N6)-methyltransferase from Serratia proteamaculans (strain 568).